A 60-amino-acid polypeptide reads, in one-letter code: DNA gyrase inhibitor YacG (60 aa).

Positions 15, 18, 30, and 34 each coordinate Zn(2+).

This sequence belongs to the DNA gyrase inhibitor YacG family. Interacts with GyrB. The cofactor is Zn(2+).

Inhibits all the catalytic activities of DNA gyrase by preventing its interaction with DNA. Acts by binding directly to the C-terminal domain of GyrB, which probably disrupts DNA binding by the gyrase. The polypeptide is DNA gyrase inhibitor YacG (Bradyrhizobium diazoefficiens (strain JCM 10833 / BCRC 13528 / IAM 13628 / NBRC 14792 / USDA 110)).